We begin with the raw amino-acid sequence, 240 residues long: Octanoyltransferase (240 aa).

Residues 1–22 (MGTTGTNDGATTPPANTSTPAV) form a disordered region. Low complexity predominate over residues 10–21 (ATTPPANTSTPA). The 186-residue stretch at 51–236 (EKIPDTILLL…NLVDALNGDL (186 aa)) folds into the BPL/LPL catalytic domain. Substrate contacts are provided by residues 89-96 (RGGRITWH), 166-168 (AIG), and 179-181 (GVA). Cysteine 197 functions as the Acyl-thioester intermediate in the catalytic mechanism.

Belongs to the LipB family.

The protein localises to the cytoplasm. The catalysed reaction is octanoyl-[ACP] + L-lysyl-[protein] = N(6)-octanoyl-L-lysyl-[protein] + holo-[ACP] + H(+). Its pathway is protein modification; protein lipoylation via endogenous pathway; protein N(6)-(lipoyl)lysine from octanoyl-[acyl-carrier-protein]: step 1/2. Catalyzes the transfer of endogenously produced octanoic acid from octanoyl-acyl-carrier-protein onto the lipoyl domains of lipoate-dependent enzymes. Lipoyl-ACP can also act as a substrate although octanoyl-ACP is likely to be the physiological substrate. The sequence is that of Octanoyltransferase from Corynebacterium jeikeium (strain K411).